The primary structure comprises 138 residues: Small ribosomal subunit protein uS12 (138 aa).

A disordered region spans residues 33-55 (KEHTNVSSPQKRGVCTRVGTMTP). A 3-methylthioaspartic acid modification is found at Asp-102.

This sequence belongs to the universal ribosomal protein uS12 family. Part of the 30S ribosomal subunit. Contacts proteins S8 and S17. May interact with IF1 in the 30S initiation complex.

Functionally, with S4 and S5 plays an important role in translational accuracy. Interacts with and stabilizes bases of the 16S rRNA that are involved in tRNA selection in the A site and with the mRNA backbone. Located at the interface of the 30S and 50S subunits, it traverses the body of the 30S subunit contacting proteins on the other side and probably holding the rRNA structure together. The combined cluster of proteins S8, S12 and S17 appears to hold together the shoulder and platform of the 30S subunit. This chain is Small ribosomal subunit protein uS12, found in Bacillus licheniformis (strain ATCC 14580 / DSM 13 / JCM 2505 / CCUG 7422 / NBRC 12200 / NCIMB 9375 / NCTC 10341 / NRRL NRS-1264 / Gibson 46).